A 457-amino-acid chain; its full sequence is Multidrug resistance protein MdtK (457 aa).

12 helical membrane-spanning segments follow: residues Leu-11–Val-31, Ala-46–Leu-66, Trp-93–Ile-113, Ala-127–Leu-147, Gly-160–Tyr-180, Leu-188–Met-208, Leu-243–Val-263, Leu-283–Phe-301, Tyr-316–Phe-336, Leu-357–Val-377, Ile-387–Gly-407, and Pro-418–Leu-438.

The protein belongs to the multi antimicrobial extrusion (MATE) (TC 2.A.66.1) family. MdtK subfamily.

Its subcellular location is the cell inner membrane. Multidrug efflux pump that functions probably as a Na(+)/drug antiporter. This is Multidrug resistance protein MdtK from Yersinia pseudotuberculosis serotype O:1b (strain IP 31758).